A 287-amino-acid polypeptide reads, in one-letter code: MKYVYLFLPAIGWGLMPLVIASVKNSTVYNQIVGTVAASFIFGAIVMAIMHPAMSWSLFLLSALGGACWVIGQVGQYISYEKIGVSETMPISTGLQLIGVPLVGVLAFGEWSSPQAKLYGFIGILVLIIGVVLTSFTDRGTSEGNKSNQVSTIILLVLTSLGYITSSSIPKALHGNSVSIFFGQTFGMLVAVFIYTLVTKNLHVWKEKSTVQSGGAGILYAIAALAYILSVQDNGVNMAFVISQLCVVISTLGGLIFLHEKKTRKGLIFTIAGLILIIGGAMLTTLF.

10 helical membrane-spanning segments follow: residues 4 to 23 (VYLFLPAIGWGLMPLVIASV), 28 to 50 (VYNQIVGTVAASFIFGAIVMAIM), 56 to 78 (WSLFLLSALGGACWVIGQVGQYI), 91 to 108 (ISTGLQLIGVPLVGVLAF), 118 to 137 (LYGFIGILVLIIGVVLTSFT), 150 to 169 (VSTIILLVLTSLGYITSSSI), 179 to 198 (SIFFGQTFGMLVAVFIYTLV), 211 to 230 (VQSGGAGILYAIAALAYILS), 240 to 259 (FVISQLCVVISTLGGLIFLH), and 266 to 285 (GLIFTIAGLILIIGGAMLTT).

It belongs to the GRP transporter (TC 2.A.7.5) family.

Its subcellular location is the cell membrane. In Lactobacillus johnsonii (strain CNCM I-12250 / La1 / NCC 533), this protein is Putative sugar uptake protein LJ_0170.